Here is a 317-residue protein sequence, read N- to C-terminus: Acetyl-coenzyme A carboxylase carboxyl transferase subunit alpha (317 aa).

The CoA carboxyltransferase C-terminal domain maps to 40–293 (LEGRVRDAMM…GTVIADALKE (254 aa)).

This sequence belongs to the AccA family. As to quaternary structure, acetyl-CoA carboxylase is a heterohexamer composed of biotin carboxyl carrier protein (AccB), biotin carboxylase (AccC) and two subunits each of ACCase subunit alpha (AccA) and ACCase subunit beta (AccD).

Its subcellular location is the cytoplasm. The enzyme catalyses N(6)-carboxybiotinyl-L-lysyl-[protein] + acetyl-CoA = N(6)-biotinyl-L-lysyl-[protein] + malonyl-CoA. The protein operates within lipid metabolism; malonyl-CoA biosynthesis; malonyl-CoA from acetyl-CoA: step 1/1. Functionally, component of the acetyl coenzyme A carboxylase (ACC) complex. First, biotin carboxylase catalyzes the carboxylation of biotin on its carrier protein (BCCP) and then the CO(2) group is transferred by the carboxyltransferase to acetyl-CoA to form malonyl-CoA. The protein is Acetyl-coenzyme A carboxylase carboxyl transferase subunit alpha of Sinorhizobium fredii (strain NBRC 101917 / NGR234).